Reading from the N-terminus, the 864-residue chain is Leucine--tRNA ligase (864 aa).

The 'HIGH' region motif lies at 42 to 52 (PYPSGKLHMGH). The 'KMSKS' region signature appears at 619–623 (KMSKS). An ATP-binding site is contributed by Lys-622.

The protein belongs to the class-I aminoacyl-tRNA synthetase family.

Its subcellular location is the cytoplasm. The catalysed reaction is tRNA(Leu) + L-leucine + ATP = L-leucyl-tRNA(Leu) + AMP + diphosphate. The polypeptide is Leucine--tRNA ligase (Wigglesworthia glossinidia brevipalpis).